Reading from the N-terminus, the 125-residue chain is Small ribosomal subunit protein uS12c (125 aa).

The tract at residues 104-125 is disordered; that stretch reads ASGVKDRKQGRSKYGGKRPKGD. Over residues 113 to 125 the composition is skewed to basic residues; it reads GRSKYGGKRPKGD.

This sequence belongs to the universal ribosomal protein uS12 family. As to quaternary structure, part of the 30S ribosomal subunit.

It is found in the plastid. It localises to the chloroplast. Functionally, with S4 and S5 plays an important role in translational accuracy. Located at the interface of the 30S and 50S subunits. This chain is Small ribosomal subunit protein uS12c (rps12), found in Emiliania huxleyi (Coccolithophore).